Reading from the N-terminus, the 297-residue chain is Lipoprotein NlpD/LppB homolog (297 aa).

Residues 1-22 (MDKGEGLRLAATLRQWTRLYGG) form the signal peptide. Residue Cys23 is the site of N-palmitoyl cysteine attachment. Residue Cys23 is the site of S-diacylglycerol cysteine attachment. A LysM domain is found at 67-111 (GQYIVRRGDTLYSIAFRFGWDWKALAARNGIAPPYTIQVGQAIQF). The disordered stretch occupies residues 134–168 (TKPTPVPPAVSTSVPAKPAPAPASTTTPPSSGATP).

It belongs to the E.coli NlpD/Haemophilus LppB family.

It localises to the cell inner membrane. This chain is Lipoprotein NlpD/LppB homolog, found in Pseudomonas aeruginosa (strain ATCC 15692 / DSM 22644 / CIP 104116 / JCM 14847 / LMG 12228 / 1C / PRS 101 / PAO1).